The primary structure comprises 224 residues: Pro-thyrotropin-releasing hormone-B (224 aa).

The first 15 residues, 1 to 15 (MMFLWWLLLLGTAIS), serve as a signal peptide directing secretion. Glutamine 75 is modified (pyrrolidone carboxylic acid). Residue proline 77 is modified to Proline amide. Over residues 86–101 (EKRQHPGKRDLEDLQL) the composition is skewed to basic and acidic residues. Disordered regions lie at residues 86–131 (EKRQ…DWSR) and 150–212 (RQHP…NSGN). At glutamine 89 the chain carries Pyrrolidone carboxylic acid. Proline amide is present on proline 91. Glutamine 105 carries the pyrrolidone carboxylic acid modification. Proline 107 bears the Proline amide mark. Over residues 110–129 (RYLEDMEKRQHPGKREEGDW) the composition is skewed to basic and acidic residues. Position 119 is a pyrrolidone carboxylic acid (glutamine 119). Proline 121 carries the proline amide modification. At glutamine 151 the chain carries Pyrrolidone carboxylic acid. Proline 153 carries the post-translational modification Proline amide. Glutamine 166 carries the post-translational modification Pyrrolidone carboxylic acid. Proline 168 carries the proline amide modification. The span at 182–199 (ENSKEVGKRQHPGKRYDP) shows a compositional bias: basic and acidic residues. Glutamine 191 carries the post-translational modification Pyrrolidone carboxylic acid. Proline 193 bears the Proline amide mark.

Belongs to the TRH family.

The protein localises to the secreted. The chain is Pro-thyrotropin-releasing hormone-B (trh-b) from Xenopus laevis (African clawed frog).